We begin with the raw amino-acid sequence, 265 residues long: Mlc titration factor A (265 aa).

Positions 111, 148, 152, and 211 each coordinate Zn(2+).

This sequence belongs to the MtfA family. Interacts with Mlc. It depends on Zn(2+) as a cofactor.

Its subcellular location is the cytoplasm. Functionally, involved in the modulation of the activity of the glucose-phosphotransferase system (glucose-PTS). Interacts with the transcriptional repressor Mlc, preventing its interaction with DNA and leading to the modulation of expression of genes regulated by Mlc, including ptsG, which encodes the PTS system glucose-specific EIICB component. In terms of biological role, shows zinc-dependent metallopeptidase activity. The polypeptide is Mlc titration factor A (Escherichia coli O7:K1 (strain IAI39 / ExPEC)).